The sequence spans 99 residues: Large ribosomal subunit protein P1 (99 aa).

In terms of assembly, part of the 50S ribosomal subunit. Homodimer, it forms part of the ribosomal stalk which helps the ribosome interact with GTP-bound translation factors. Forms both a pentameric uL10/P0(P1)2(P1)2 and heptameric uL10/P0(P1)2(P1)2(P1)2 complex, where uL10/P0 forms an elongated spine to which the P1 dimers bind in a sequential fashion. The proportion of heptameric complexes increases during cell growth.

Its function is as follows. Forms part of the ribosomal stalk, playing a central role in the interaction of the ribosome with GTP-bound translation factors. This Methanococcus vannielii protein is Large ribosomal subunit protein P1.